A 373-amino-acid polypeptide reads, in one-letter code: Anhydro-N-acetylmuramic acid kinase (373 aa).

13–20 (GTSMDGID) contacts ATP.

It belongs to the anhydro-N-acetylmuramic acid kinase family.

The enzyme catalyses 1,6-anhydro-N-acetyl-beta-muramate + ATP + H2O = N-acetyl-D-muramate 6-phosphate + ADP + H(+). Its pathway is amino-sugar metabolism; 1,6-anhydro-N-acetylmuramate degradation. The protein operates within cell wall biogenesis; peptidoglycan recycling. Functionally, catalyzes the specific phosphorylation of 1,6-anhydro-N-acetylmuramic acid (anhMurNAc) with the simultaneous cleavage of the 1,6-anhydro ring, generating MurNAc-6-P. Is required for the utilization of anhMurNAc either imported from the medium or derived from its own cell wall murein, and thus plays a role in cell wall recycling. The polypeptide is Anhydro-N-acetylmuramic acid kinase (Brucella abortus (strain 2308)).